Consider the following 435-residue polypeptide: Enolase (435 aa).

Glutamine 163 provides a ligand contact to (2R)-2-phosphoglycerate. Glutamate 205 functions as the Proton donor in the catalytic mechanism. Mg(2+) is bound by residues aspartate 243, glutamate 292, and aspartate 319. The (2R)-2-phosphoglycerate site is built by lysine 344, arginine 373, serine 374, and lysine 395. The active-site Proton acceptor is the lysine 344.

It belongs to the enolase family. As to quaternary structure, homooctamer, a tetramer of homodimers. Mg(2+) is required as a cofactor.

It is found in the cytoplasm. The protein resides in the secreted. The protein localises to the cell surface. Its subcellular location is the cell wall. The catalysed reaction is (2R)-2-phosphoglycerate = phosphoenolpyruvate + H2O. It participates in carbohydrate degradation; glycolysis; pyruvate from D-glyceraldehyde 3-phosphate: step 4/5. In terms of biological role, catalyzes the reversible conversion of 2-phosphoglycerate (2-PG) into phosphoenolpyruvate (PEP). It is essential for the degradation of carbohydrates via glycolysis. 'Moonlights' as a plasminogen receptor. Binds plasminogen and more weakly plasmin when expressed on the bacterial cell surface; probably has more than one plasmin(ogen) binding site, may bind via Lys residues. Plasminogen binding potentially allows the bacterium to acquire surface-associated proteolytic activity, which in turn contributes to tissue invasion and virulence. The chain is Enolase from Streptococcus pyogenes serotype M6 (strain ATCC BAA-946 / MGAS10394).